A 375-amino-acid chain; its full sequence is MRAQGDRYIGIMSGTSMDGADAVLVDFSGERPAVLAAAHEPFPDALRADFGQLQQPGDNEIHREALAANALARVYAGCVTTLLGQAGLQAGDVAAIGAHGQTIRHRPGLYDEIGYTRQSQHPALLAELAGIDVVADFRSRDVAAGGQGAPLVPALHQALFGDGAEARVVCNIGGISNISVLPGDSGAVIGFDCGPGNALLDYWIGEQLGMPYDDDGAWAASGRVDEALLAACLADPYFNAAPPKSTGRDLFHPAWLEARLATRSGPALSPADVQATLAALTAEAIARDVRAHAAPAKRLIVCGGGARNGYIMRRLAQALPGVAVQTTEDFGVPVSQVEAIAFAWLARQCLLRLPGNVATVTGAAGPRVLGAIYPR.

Residue 14–21 coordinates ATP; sequence GTSMDGAD.

Belongs to the anhydro-N-acetylmuramic acid kinase family.

It catalyses the reaction 1,6-anhydro-N-acetyl-beta-muramate + ATP + H2O = N-acetyl-D-muramate 6-phosphate + ADP + H(+). It functions in the pathway amino-sugar metabolism; 1,6-anhydro-N-acetylmuramate degradation. The protein operates within cell wall biogenesis; peptidoglycan recycling. In terms of biological role, catalyzes the specific phosphorylation of 1,6-anhydro-N-acetylmuramic acid (anhMurNAc) with the simultaneous cleavage of the 1,6-anhydro ring, generating MurNAc-6-P. Is required for the utilization of anhMurNAc either imported from the medium or derived from its own cell wall murein, and thus plays a role in cell wall recycling. This is Anhydro-N-acetylmuramic acid kinase from Cupriavidus pinatubonensis (strain JMP 134 / LMG 1197) (Cupriavidus necator (strain JMP 134)).